Reading from the N-terminus, the 395-residue chain is NAD(P)H-quinone oxidoreductase subunit H, chloroplastic (395 aa).

Belongs to the complex I 49 kDa subunit family. In terms of assembly, NDH is composed of at least 16 different subunits, 5 of which are encoded in the nucleus.

Its subcellular location is the plastid. It localises to the chloroplast thylakoid membrane. The enzyme catalyses a plastoquinone + NADH + (n+1) H(+)(in) = a plastoquinol + NAD(+) + n H(+)(out). It carries out the reaction a plastoquinone + NADPH + (n+1) H(+)(in) = a plastoquinol + NADP(+) + n H(+)(out). Functionally, NDH shuttles electrons from NAD(P)H:plastoquinone, via FMN and iron-sulfur (Fe-S) centers, to quinones in the photosynthetic chain and possibly in a chloroplast respiratory chain. The immediate electron acceptor for the enzyme in this species is believed to be plastoquinone. Couples the redox reaction to proton translocation, and thus conserves the redox energy in a proton gradient. The polypeptide is NAD(P)H-quinone oxidoreductase subunit H, chloroplastic (Chloranthus spicatus (Chulantree)).